Consider the following 241-residue polypeptide: Probable xyloglucan-specific endo-beta-1,4-glucanase A (241 aa).

A signal peptide spans 1–15 (MKVLALSALLSLASA). The N-linked (GlcNAc...) asparagine glycan is linked to asparagine 47.

It belongs to the glycosyl hydrolase 12 (cellulase H) family.

The protein resides in the secreted. The catalysed reaction is xyloglucan + H2O = xyloglucan oligosaccharides.. In terms of biological role, catalyzes endohydrolysis of 1,4-beta-D-glucosidic linkages in xyloglucan with retention of the beta-configuration of the glycosyl residues. Specific for xyloglucan and does not hydrolyze other cell wall components. The sequence is that of Probable xyloglucan-specific endo-beta-1,4-glucanase A (xgeA) from Aspergillus niger (strain ATCC MYA-4892 / CBS 513.88 / FGSC A1513).